The chain runs to 329 residues: MKTMTQLNIAVVVVVTVLIGMLRSSEAQLQMNFYAKSCPNAEKIISDHIQNHIHNGPSLAAPLIRMHFHDCFVRGCDGSVLINSTSGNAERDAPPNLTLRGFGFVERIKALLEKVCPKTVSCADIIALTARDAVVATGGPSWSVPTGRRDGRISNKTEATNNIPPPTSNFTTLQRLFKNQGLNLKDLVLLSGAHTIGVSHCSSMNTRLYNFSTTVKQDPSLDSQYAANLKANKCKSLNDNSTILEMDPGSSRSFDLSYYRLVLKRRGLFQSDSALTTNSATLKVINDLVNGSEKKFFKAFAKSMEKMGRVKVKTGSAGVIRTRCSVAGS.

A signal peptide spans 1–27; it reads MKTMTQLNIAVVVVVTVLIGMLRSSEA. 4 disulfides stabilise this stretch: C38–C116, C71–C76, C122–C324, and C201–C234. H69 functions as the Proton acceptor in the catalytic mechanism. Residues D70, V73, G75, D77, and S79 each coordinate Ca(2+). Residues N83 and N155 are each glycosylated (N-linked (GlcNAc...) asparagine). The tract at residues 141 to 165 is disordered; the sequence is SWSVPTGRRDGRISNKTEATNNIPP. The segment covering 156 to 165 has biased composition (polar residues); it reads KTEATNNIPP. Position 164 (P164) interacts with substrate. N-linked (GlcNAc...) asparagine glycosylation occurs at N169. A heme b-binding site is contributed by H194. T195 contributes to the Ca(2+) binding site. N-linked (GlcNAc...) asparagine glycans are attached at residues N210 and N240. D247, S250, and D255 together coordinate Ca(2+). N-linked (GlcNAc...) asparagine glycosylation is present at N290.

It belongs to the peroxidase family. Classical plant (class III) peroxidase subfamily. It depends on heme b as a cofactor. The cofactor is Ca(2+). As to expression, mainly expressed in roots.

Its subcellular location is the secreted. It carries out the reaction 2 a phenolic donor + H2O2 = 2 a phenolic radical donor + 2 H2O. Removal of H(2)O(2), oxidation of toxic reductants, biosynthesis and degradation of lignin, suberization, auxin catabolism, response to environmental stresses such as wounding, pathogen attack and oxidative stress. These functions might be dependent on each isozyme/isoform in each plant tissue. This chain is Peroxidase 30 (PER30), found in Arabidopsis thaliana (Mouse-ear cress).